Here is a 234-residue protein sequence, read N- to C-terminus: DNA repair and recombination protein RadB (234 aa).

This sequence belongs to the eukaryotic RecA-like protein family. RadB subfamily.

In terms of biological role, involved in DNA repair and in homologous recombination. May regulate the cleavage reactions of the branch-structured DNA. Has a very weak ATPase activity that is not stimulated by DNA. Binds DNA but does not promote DNA strands exchange. This Methanobrevibacter smithii (strain ATCC 35061 / DSM 861 / OCM 144 / PS) protein is DNA repair and recombination protein RadB.